We begin with the raw amino-acid sequence, 699 residues long: Glutamine--fructose-6-phosphate aminotransferase [isomerizing] (699 aa).

C2 serves as the catalytic Nucleophile. A Glutamine amidotransferase type-2 domain is found at 2–303 (CGIFGYANFS…DNDIVHISNG (302 aa)). SIS domains are found at residues 377–516 (HVSG…QNLV) and 544–689 (SVKS…ADFP).

The catalysed reaction is D-fructose 6-phosphate + L-glutamine = D-glucosamine 6-phosphate + L-glutamate. It functions in the pathway nucleotide-sugar biosynthesis; UDP-N-acetyl-alpha-D-glucosamine biosynthesis; alpha-D-glucosamine 6-phosphate from D-fructose 6-phosphate: step 1/1. In terms of biological role, involved in amino sugar synthesis (formation of chitin, supplies the amino sugars of asparagine-linked oligosaccharides of glycoproteins). The protein is Glutamine--fructose-6-phosphate aminotransferase [isomerizing] (GFA1) of Encephalitozoon cuniculi (strain GB-M1) (Microsporidian parasite).